The following is a 1125-amino-acid chain: Phytochrome A (1125 aa).

Low complexity-rich tracts occupy residues 1–14 (MSSS…SNSA) and 39–48 (SGSSFDYSSS). Disordered stretches follow at residues 1-22 (MSSS…SARI) and 38-64 (ESGS…PRSD). The 184-residue stretch at 218–401 (SMERLCDTMV…VFAIHVNKEL (184 aa)) folds into the GAF domain. Position 323 (cysteine 323) interacts with phytochromobilin. 2 consecutive PAS domains span residues 617–687 (VTSE…LQGK) and 750–821 (DYKA…VNLG). Residues 901–1117 (YLKKQIWNPL…SFIISVELAG (217 aa)) form the Histidine kinase domain.

Belongs to the phytochrome family. As to quaternary structure, homodimer. Contains one covalently linked phytochromobilin chromophore.

Functionally, regulatory photoreceptor which exists in two forms that are reversibly interconvertible by light: the Pr form that absorbs maximally in the red region of the spectrum and the Pfr form that absorbs maximally in the far-red region. Photoconversion of Pr to Pfr induces an array of morphogenic responses, whereas reconversion of Pfr to Pr cancels the induction of those responses. Pfr controls the expression of a number of nuclear genes including those encoding the small subunit of ribulose-bisphosphate carboxylase, chlorophyll A/B binding protein, protochlorophyllide reductase, rRNA, etc. It also controls the expression of its own gene(s) in a negative feedback fashion. The sequence is that of Phytochrome A (PHYA) from Populus tremuloides (Quaking aspen).